A 292-amino-acid chain; its full sequence is Elongation factor Ts (292 aa).

Residues 79–82 (TDFV) are involved in Mg(2+) ion dislocation from EF-Tu.

This sequence belongs to the EF-Ts family.

The protein localises to the cytoplasm. In terms of biological role, associates with the EF-Tu.GDP complex and induces the exchange of GDP to GTP. It remains bound to the aminoacyl-tRNA.EF-Tu.GTP complex up to the GTP hydrolysis stage on the ribosome. The chain is Elongation factor Ts from Xanthomonas campestris pv. campestris (strain B100).